The primary structure comprises 113 residues: uncharacterized protein (113 aa).

The protein belongs to the ycf68 family.

The protein resides in the plastid. It localises to the chloroplast. This is an uncharacterized protein from Eucalyptus globulus subsp. globulus (Tasmanian blue gum).